The sequence spans 177 residues: Interleukin-1 receptor antagonist protein (177 aa).

The signal sequence occupies residues 1–25 (MEVCRCHHGYLISLLLFLFHSETAC). A disulfide bridge connects residues cysteine 91 and cysteine 141. 2 N-linked (GlcNAc...) asparagine glycosylation sites follow: asparagine 109 and asparagine 114.

Belongs to the IL-1 family.

The protein resides in the secreted. In terms of biological role, anti-inflammatory antagonist of interleukin-1 family of proinflammatory cytokines such as interleukin-1beta/IL1B and interleukin-1alpha/IL1A. Protects from immune dysregulation and uncontrolled systemic inflammation triggered by IL1 for a range of innate stimulatory agents such as pathogens. In Tursiops truncatus (Atlantic bottle-nosed dolphin), this protein is Interleukin-1 receptor antagonist protein (IL1RN).